Reading from the N-terminus, the 238-residue chain is Probable transcriptional regulatory protein YeeN (238 aa).

The protein belongs to the TACO1 family. YeeN subfamily.

The protein localises to the cytoplasm. The chain is Probable transcriptional regulatory protein YeeN from Escherichia coli (strain UTI89 / UPEC).